Reading from the N-terminus, the 118-residue chain is Co-chaperonin GroES (118 aa).

This sequence belongs to the GroES chaperonin family. In terms of assembly, heptamer of 7 subunits arranged in a ring. Interacts with the chaperonin GroEL.

It is found in the cytoplasm. Its function is as follows. Together with the chaperonin GroEL, plays an essential role in assisting protein folding. The GroEL-GroES system forms a nano-cage that allows encapsulation of the non-native substrate proteins and provides a physical environment optimized to promote and accelerate protein folding. GroES binds to the apical surface of the GroEL ring, thereby capping the opening of the GroEL channel. The polypeptide is Co-chaperonin GroES (Helicobacter pylori (strain Shi470)).